We begin with the raw amino-acid sequence, 229 residues long: Glutathione S-transferase 3 (229 aa).

A2 carries the blocked amino end (Ala) modification. Residues 3–83 (AKPVLYYFNG…YIAGKYNLYG (81 aa)) enclose the GST N-terminal domain. Residues Y9, 54–55 (QV), and 67–68 (QT) each bind glutathione. A GST C-terminal domain is found at 85-207 (DLKERALIDM…LAPGSKRKPI (123 aa)).

It belongs to the GST superfamily. Alpha family. In terms of assembly, homodimer or heterodimer (with a subunit from group CL-4).

It localises to the cytoplasm. The catalysed reaction is RX + glutathione = an S-substituted glutathione + a halide anion + H(+). Catalyzes the conjugation of GSH to a wide variety of electrophilic alkylating agents. Also involved in the metabolism of lipid hydroperoxides, prostaglandins and leukotriene A4 and in binding of non-substrate hydrophobic ligands such as bile acids, a number of drugs and thyroid hormones. This GST does not exhibit peroxidase activity. The polypeptide is Glutathione S-transferase 3 (Gallus gallus (Chicken)).